The sequence spans 842 residues: Leucine--tRNA ligase (842 aa).

A 'HIGH' region motif is present at residues 44 to 55 (PYPSANGLHVGH). A 'KMSKS' region motif is present at residues 619 to 623 (KMSKS). Lys-622 lines the ATP pocket.

This sequence belongs to the class-I aminoacyl-tRNA synthetase family.

Its subcellular location is the cytoplasm. The enzyme catalyses tRNA(Leu) + L-leucine + ATP = L-leucyl-tRNA(Leu) + AMP + diphosphate. The chain is Leucine--tRNA ligase from Borrelia turicatae (strain 91E135).